A 340-amino-acid chain; its full sequence is Glyceraldehyde-3-phosphate dehydrogenase (340 aa).

Residues 11–12 (TI) and Gly-109 each bind NAD(+). Residue 138–140 (SCN) participates in D-glyceraldehyde 3-phosphate binding. The active-site Nucleophile is the Cys-139. An NAD(+)-binding site is contributed by Arg-167. 193 to 194 (HA) is a binding site for D-glyceraldehyde 3-phosphate. NAD(+) is bound at residue Gln-300.

It belongs to the glyceraldehyde-3-phosphate dehydrogenase family. In terms of assembly, homotetramer.

The protein resides in the cytoplasm. The catalysed reaction is D-glyceraldehyde 3-phosphate + phosphate + NADP(+) = (2R)-3-phospho-glyceroyl phosphate + NADPH + H(+). It catalyses the reaction D-glyceraldehyde 3-phosphate + phosphate + NAD(+) = (2R)-3-phospho-glyceroyl phosphate + NADH + H(+). The protein operates within carbohydrate degradation; glycolysis; pyruvate from D-glyceraldehyde 3-phosphate: step 1/5. The chain is Glyceraldehyde-3-phosphate dehydrogenase from Metallosphaera sedula (strain ATCC 51363 / DSM 5348 / JCM 9185 / NBRC 15509 / TH2).